The sequence spans 80 residues: Styelin-C (80 aa).

The N-terminal stretch at 1–22 is a signal peptide; it reads MQMKATILIVLVALFMIQQSEA. Trp24 carries the post-translational modification 6'-bromotryptophan. Residue Leu53 is modified to Leucine amide. A propeptide spans 55-80 (removed in mature form); sequence DMTDEEFQEFMQDIEQAREEELLSRQ.

It localises to the secreted. Its function is as follows. Bactericidal against several Gram-positive and Gram-negative bacteria. This Styela clava (Sea squirt) protein is Styelin-C.